The following is a 419-amino-acid chain: D(4) dopamine receptor (419 aa).

Over 1 to 29 (MGNRSTADADGLLAGRGPAAGASAGASAG) the chain is Extracellular. N-linked (GlcNAc...) asparagine glycosylation is present at Asn-3. The chain crosses the membrane as a helical span at residues 30 to 50 (LAGQGAAALVGGVLLIGAVLA). At 51–71 (GNSLVCVSVATERALQTPTNS) the chain is on the cytoplasmic side. Residues 72–92 (FIVSLAAADLLLALLVLPLFV) traverse the membrane as a helical segment. Asp-80 provides a ligand contact to Na(+). Residues 93–110 (YSEVQGGAWLLSPRLCDA) lie on the Extracellular side of the membrane. An intrachain disulfide couples Cys-108 to Cys-185. Residues 111 to 131 (LMAMDVMLCTASIFNLCAISV) traverse the membrane as a helical segment. (2R,3R)-nemonapride is bound at residue Asp-115. Na(+) is bound at residue Ser-122. At 132 to 152 (DRFVAVAVPLRYNRQGGSRRQ) the chain is on the cytoplasmic side. Residues 153-173 (LLLIGATWLLSAAVAAPVLCG) traverse the membrane as a helical segment. The Extracellular portion of the chain corresponds to 174–192 (LNDVRGRDPAVCRLEDRDY). Residues 193-213 (VVYSSVCSFFLPCPLMLLLYW) form a helical membrane-spanning segment. Ser-196 lines the (2R,3R)-nemonapride pocket. At 214–346 (ATFRGLQRWE…ITGRERKAMR (133 aa)) the chain is on the cytoplasmic side. The interval 230–264 (LHGRAPRRPSGPGPPSPTPPAPRLPQDPCGPDCAP) is disordered. Positions 238 to 254 (PSGPGPPSPTPPAPRLP) are enriched in pro residues. The 1; approximate repeat unit spans residues 249–264 (PAPRLPQDPCGPDCAP). The tract at residues 249–312 (PAPRLPQDPC…PDPCGSNCAP (64 aa)) is 4 X 16 AA approximate tandem repeats of [PA]-A-P-G-L-P-[PQR]-[DG]-P-C-G-P-D-C-A-P. Tandem repeats lie at residues 265–280 (PAPGLPRGPCGPDCAP) and 281–296 (AAPSLPQDPCGPDCAP). Residues 297 to 312 (PAPGLPPDPCGSNCAP) form a 4; approximate repeat. The disordered stretch occupies residues 317-336 (RAAALPPQTPPQTRRRRRAK). The helical transmembrane segment at 347–367 (VLPVVVGAFLLCWTPFFVVHI) threads the bilayer. The Extracellular segment spans residues 368–382 (TQALCPACSVPPRLV). Cys-372 and Cys-375 form a disulfide bridge. Residues 383 to 403 (SAVTWLGYVNSALNPVIYTVF) form a helical membrane-spanning segment. The Cytoplasmic segment spans residues 404–419 (NAEFRNVFRKALRACC). Cys-419 carries S-palmitoyl cysteine lipidation.

It belongs to the G-protein coupled receptor 1 family. In terms of assembly, forms homo- and heterooligomers with DRD2. D4.7 allele exhibits higher affinity for homodimers compared to DRD2 heterodimers, while alleles D42. and 4.4 have similar affinities for both. The interaction with DRD2 may modulate agonist-induced downstream signaling. Interacts with CLIC6. Interacts with GPRASP1. May interact with ADORA2A. Interacts with KLHL12. Polyubiquitinated by the BCR(KLHL12) E3 ubiquitin ligase complex: polyubiquitination does not lead to degradation of DRD4 protein. Post-translationally, palmitoylated. Palmitoylation of the C-terminal Cys is important for normal expression at the cell membrane. Highly expressed in retina. Detected at much lower levels in brain, in amygdala, thalamus, hypothalamus, cerebellum and pituitary.

The protein localises to the cell membrane. Signaling in response to agonists such as dopamine, epinephrine and norepinephrine is modulated by Na(+); lower Na(+) levels result in higher receptor activity (in vitro). Functionally, dopamine receptor responsible for neuronal signaling in the mesolimbic system of the brain, an area of the brain that regulates emotion and complex behavior. Activated by dopamine, but also by epinephrine and norepinephrine, and by numerous synthetic agonists and drugs. Agonist binding triggers signaling via G proteins that inhibit adenylyl cyclase. Modulates the circadian rhythm of contrast sensitivity by regulating the rhythmic expression of NPAS2 in the retinal ganglion cells. The chain is D(4) dopamine receptor (DRD4) from Homo sapiens (Human).